The sequence spans 167 residues: Small ribosomal subunit protein uS5 (167 aa).

Residues L12–I75 form the S5 DRBM domain.

Belongs to the universal ribosomal protein uS5 family. In terms of assembly, part of the 30S ribosomal subunit. Contacts proteins S4 and S8.

In terms of biological role, with S4 and S12 plays an important role in translational accuracy. Functionally, located at the back of the 30S subunit body where it stabilizes the conformation of the head with respect to the body. This Vibrio cholerae serotype O1 (strain ATCC 39541 / Classical Ogawa 395 / O395) protein is Small ribosomal subunit protein uS5.